Here is a 371-residue protein sequence, read N- to C-terminus: Aminomethyltransferase (371 aa).

Belongs to the GcvT family. The glycine cleavage system is composed of four proteins: P, T, L and H.

It catalyses the reaction N(6)-[(R)-S(8)-aminomethyldihydrolipoyl]-L-lysyl-[protein] + (6S)-5,6,7,8-tetrahydrofolate = N(6)-[(R)-dihydrolipoyl]-L-lysyl-[protein] + (6R)-5,10-methylene-5,6,7,8-tetrahydrofolate + NH4(+). The glycine cleavage system catalyzes the degradation of glycine. This Cutibacterium acnes (strain DSM 16379 / KPA171202) (Propionibacterium acnes) protein is Aminomethyltransferase.